We begin with the raw amino-acid sequence, 442 residues long: Proline--tRNA ligase (442 aa).

Belongs to the class-II aminoacyl-tRNA synthetase family. ProS type 2 subfamily. In terms of assembly, homodimer.

Its subcellular location is the cytoplasm. It carries out the reaction tRNA(Pro) + L-proline + ATP = L-prolyl-tRNA(Pro) + AMP + diphosphate. Its function is as follows. Catalyzes the attachment of proline to tRNA(Pro) in a two-step reaction: proline is first activated by ATP to form Pro-AMP and then transferred to the acceptor end of tRNA(Pro). In Brucella suis (strain ATCC 23445 / NCTC 10510), this protein is Proline--tRNA ligase.